Here is a 702-residue protein sequence, read N- to C-terminus: Sodium/hydrogen exchanger 6 (702 aa).

A run of 12 helical transmembrane segments spans residues 72–92, 104–124, 177–197, 212–232, 253–273, 279–299, 325–345, 373–393, 415–435, 437–457, 480–500, and 516–536; these read SANL…IWLF, GLAM…IHVP, VTFD…FYAG, ILAY…SIMY, CLLF…AIFH, VELY…AIVL, IGIF…TGVV, TFLL…FCGI, FELL…LTLF, FQNH…IFLG, NFQH…ALAI, and LLIV…MLSC.

It belongs to the monovalent cation:proton antiporter 1 (CPA1) transporter (TC 2.A.36) family. Homodimer. Interacts with RACK1; regulates the distribution of SLC9A6 between endosomes and the plasma membrane. In terms of processing, ubiquitinated (in vitro). Glycosylated.

It localises to the endosome membrane. The protein localises to the recycling endosome membrane. The protein resides in the early endosome membrane. It is found in the late endosome membrane. Its subcellular location is the cell membrane. The catalysed reaction is Na(+)(in) + H(+)(out) = Na(+)(out) + H(+)(in). It catalyses the reaction K(+)(in) + H(+)(out) = K(+)(out) + H(+)(in). Endosomal Na(+), K(+)/H(+) antiporter. Mediates the electroneutral exchange of endosomal luminal H(+) for a cytosolic Na(+) or K(+). By facilitating proton efflux, SLC9A6 counteracts the acidity generated by vacuolar (V)-ATPase, thereby limiting luminal acidification. Responsible for alkalizing and maintaining the endosomal pH, and consequently in, e.g., endosome maturation and trafficking of recycling endosomal cargo. Plays a critical role during neurodevelopment by regulating synaptic development and plasticity. Implicated in the maintenance of cell polarity in a manner that is dependent on its ability to modulate intravesicular pH. Regulates intracelular pH in some specialized cells, osteoclasts and stereocilia where this transporter localizes to the plasma membrane. In Mus musculus (Mouse), this protein is Sodium/hydrogen exchanger 6 (Slc9a6).